Consider the following 267-residue polypeptide: Glucosamine-6-phosphate deaminase (267 aa).

Aspartate 72 functions as the Proton acceptor; for enolization step in the catalytic mechanism. Residue aspartate 141 is the For ring-opening step of the active site. Histidine 143 acts as the Proton acceptor; for ring-opening step in catalysis. Residue glutamate 148 is the For ring-opening step of the active site.

This sequence belongs to the glucosamine/galactosamine-6-phosphate isomerase family. NagB subfamily. Homohexamer.

The enzyme catalyses alpha-D-glucosamine 6-phosphate + H2O = beta-D-fructose 6-phosphate + NH4(+). It functions in the pathway amino-sugar metabolism; N-acetylneuraminate degradation; D-fructose 6-phosphate from N-acetylneuraminate: step 5/5. Its activity is regulated as follows. Allosterically activated by N-acetylglucosamine 6-phosphate (GlcNAc6P). Functionally, catalyzes the reversible isomerization-deamination of glucosamine 6-phosphate (GlcN6P) to form fructose 6-phosphate (Fru6P) and ammonium ion. This chain is Glucosamine-6-phosphate deaminase, found in Actinobacillus pleuropneumoniae serotype 3 (strain JL03).